A 166-amino-acid polypeptide reads, in one-letter code: Lipoprotein signal peptidase (166 aa).

3 helical membrane passes run 12-32 (LPIA…KYLV), 66-86 (MEGW…LWLW), and 101-121 (AMII…GYVI). Residues Asp-122 and Asp-140 contribute to the active site. A helical transmembrane segment spans residues 132 to 152 (SFAVFNLADSFITVGAGAIIL).

The protein belongs to the peptidase A8 family.

The protein localises to the cell inner membrane. It carries out the reaction Release of signal peptides from bacterial membrane prolipoproteins. Hydrolyzes -Xaa-Yaa-Zaa-|-(S,diacylglyceryl)Cys-, in which Xaa is hydrophobic (preferably Leu), and Yaa (Ala or Ser) and Zaa (Gly or Ala) have small, neutral side chains.. Its pathway is protein modification; lipoprotein biosynthesis (signal peptide cleavage). Its function is as follows. This protein specifically catalyzes the removal of signal peptides from prolipoproteins. The polypeptide is Lipoprotein signal peptidase (Sinorhizobium fredii (strain NBRC 101917 / NGR234)).